Reading from the N-terminus, the 141-residue chain is Arsenate reductase (141 aa).

Cysteine 12 functions as the Nucleophile; cysteine thioarsenate intermediate in the catalytic mechanism.

The protein belongs to the ArsC family.

The catalysed reaction is [glutaredoxin]-dithiol + arsenate + glutathione + H(+) = glutathionyl-S-S-[glutaredoxin] + arsenite + H2O. Functionally, involved in resistance to arsenate. Catalyzes the reduction of arsenate [As(V)] to arsenite [As(III)]. The polypeptide is Arsenate reductase (Escherichia coli (strain K12)).